Here is a 1056-residue protein sequence, read N- to C-terminus: ATP-dependent helicase wrn-1 (1056 aa).

The segment at 1 to 102 is disordered; the sequence is MISDDDDLPS…SSSDDSDQGD (102 aa). 2 tandem repeats follow at residues 17–26 and 28–37. Residues 17 to 37 form a 2 X 10 AA repeats of N-[ED]-E-L-P-E-T-E-P-E region; the sequence is NEELPETEPEDNDELPETEPE. Residues 19-38 are compositionally biased toward acidic residues; it reads ELPETEPEDNDELPETEPES. Over residues 43 to 53 the composition is skewed to polar residues; that stretch reads PTVTSNKTENQ. The span at 54–63 shows a compositional bias: acidic residues; it reads VADEDYDSFD. The region spanning 236–406 is the Helicase ATP-binding domain; the sequence is VRNVLGGKDQ…IANLRLRKPL (171 aa). Residue 249 to 256 participates in ATP binding; sequence MSTGYGKS. The short motif at 348–351 is the DEAH box element; that stretch reads DEAH. Residues 427 to 583 form the Helicase C-terminal domain; sequence MAEDLGLFMK…NLTMMLRQLE (157 aa). Zn(2+) is bound by residues Cys-591, Cys-614, Cys-615, and Cys-618. The tract at residues 749–771 is disordered; sequence KEKAAPSTVPGASRSQSTKSSTE. Polar residues predominate over residues 761 to 771; sequence SRSQSTKSSTE. An HRDC domain is found at 806–886; it reads PEKIDQLRSR…VQFSKETGIA (81 aa). The tract at residues 1018–1056 is disordered; the sequence is QEKPDIQSMPSTSNPSTIKTVPSTPSSSLRAPPLKKFKL. Over residues 1025-1046 the composition is skewed to polar residues; that stretch reads SMPSTSNPSTIKTVPSTPSSSL.

This sequence belongs to the helicase family. RecQ subfamily. It depends on Zn(2+) as a cofactor.

It is found in the nucleus. The enzyme catalyses Couples ATP hydrolysis with the unwinding of duplex DNA by translocating in the 3'-5' direction.. It carries out the reaction ATP + H2O = ADP + phosphate + H(+). Essential for the formation of DNA replication focal centers; stably associates with foci elements generating binding sites for RP-A. Exhibits a magnesium-dependent ATP-dependent 3'-5' DNA-helicase activity. May be involved in the control of genomic stability. In Caenorhabditis elegans, this protein is ATP-dependent helicase wrn-1 (wrn-1).